Here is a 190-residue protein sequence, read N- to C-terminus: Translation initiation factor IF-3 (190 aa).

The interval 159–190 (QSEVQQKPKREGRNMIMFLSPRKSPLIKKDNE) is disordered.

This sequence belongs to the IF-3 family. In terms of assembly, monomer.

Its subcellular location is the cytoplasm. Its function is as follows. IF-3 binds to the 30S ribosomal subunit and shifts the equilibrium between 70S ribosomes and their 50S and 30S subunits in favor of the free subunits, thus enhancing the availability of 30S subunits on which protein synthesis initiation begins. The polypeptide is Translation initiation factor IF-3 (Prochlorococcus marinus (strain MIT 9215)).